Reading from the N-terminus, the 201-residue chain is Cerebellin-4 (201 aa).

The N-terminal stretch at 1–27 (MGSGRRALSAVPAVLLVLTLPGLPVWA) is a signal peptide. N-linked (GlcNAc...) asparagine glycosylation is found at asparagine 29 and asparagine 88. In terms of domain architecture, C1q spans 66–201 (AANSKVAFSA…TFSGFLVFPL (136 aa)).

In terms of assembly, homohexamer; disulfide-linked homotrimers. The trimers are assembled via the globular C1q domains. The trimers associate via N-terminal cysteine residues to form disulfide-linked hexamers. May form oligomers with CBLN1, CBLN2 and CBLN3 prior to secretion. Strongly interacts with DCC in a NTN1-displaceable fashion. Weakly binds to NRXN1 and NRXN2 long and short isoforms produced by alternative promoter usage. Interaction with NRXN3 short isoform is hardly detectable; no interaction at all with NRXN3 long isoform. Sialoglycoprotein.

It localises to the secreted. The protein resides in the synapse. Its function is as follows. Acts as a synaptic organizer in specific subsets of neurons in the brain. Essential for the formation and maintenance of inhibitory GABAergic synapses. Promotes the development of dendrite-targeting inhibitory GABAergic synapses made by somatostatin-positive interneurons. May contribute to the function of ventral medial habenula region of the brain implicated in the regulation of anxiety-related behaviors. May play a role in CBLN3 export from the endoplasmic reticulum and secretion. This Homo sapiens (Human) protein is Cerebellin-4 (CBLN4).